Reading from the N-terminus, the 257-residue chain is Anamorsin homolog (257 aa).

Residues 1 to 132 (MSVLALDVAR…ARGTAFALKS (132 aa)) form an N-terminal SAM-like domain region. Residues 133–171 (RAVRVNATAADAADAWGASAAADDDELIDESALLTELDV) are linker. [2Fe-2S] cluster is bound by residues Cys181, Cys190, Cys193, and Cys195. The tract at residues 181–195 (CDVGAGKKACKNCTC) is fe-S binding site A. The [4Fe-4S] cluster site is built by Cys219, Cys222, Cys230, and Cys233. Short sequence motifs (cx2C motif) lie at residues 219–222 (CGNC) and 230–233 (CAGC). The tract at residues 219-233 (CGNCALGDAFRCAGC) is fe-S binding site B.

It belongs to the anamorsin family. As to quaternary structure, monomer. It depends on [2Fe-2S] cluster as a cofactor. Requires [4Fe-4S] cluster as cofactor.

Its subcellular location is the cytoplasm. It is found in the mitochondrion intermembrane space. Functionally, component of the cytosolic iron-sulfur (Fe-S) protein assembly (CIA) machinery. Required for the maturation of extramitochondrial Fe-S proteins. Part of an electron transfer chain functioning in an early step of cytosolic Fe-S biogenesis, facilitating the de novo assembly of a [4Fe-4S] cluster on the cytosolic Fe-S scaffold complex. Electrons are transferred from NADPH via a FAD- and FMN-containing diflavin oxidoreductase. Together with the diflavin oxidoreductase, also required for the assembly of the diferric tyrosyl radical cofactor of ribonucleotide reductase (RNR), probably by providing electrons for reduction during radical cofactor maturation in the catalytic small subunit. In Ostreococcus lucimarinus (strain CCE9901), this protein is Anamorsin homolog.